An 898-amino-acid polypeptide reads, in one-letter code: Methionine--tRNA ligase, cytoplasmic (898 aa).

In terms of domain architecture, GST C-terminal spans 74–198 (GWEQDDLTNQ…VLKQQGVLAL (125 aa)). Residues 273-283 (PYVNNVPHLGN) carry the 'HIGH' region motif. Positions 593–597 (KFSKS) match the 'KMSKS' region motif. Lysine 596 lines the ATP pocket. Serine 825 carries the phosphoserine modification. Threonine 833 is subject to Phosphothreonine. The region spanning 839 to 895 (QIQALTEEVTKQGNIVRELKAQKADKNQIAAEVAKLLDLKKQLALAEGKPLETSKGK) is the WHEP-TRS domain.

This sequence belongs to the class-I aminoacyl-tRNA synthetase family. Monomer. Part of a multisubunit complex that groups tRNA ligases for Arg (RARS1), Asp (DARS1), Gln (QARS1), Ile (IARS1), Leu (LARS1), Lys (KARS1), Met (MARS1) the bifunctional ligase for Glu and Pro (EPRS1) and the auxiliary subunits AIMP1/p43, AIMP2/p38 and EEF1E1/p18. Forms a linear complex that contains MARS1, EEF1E1, EPRS1 and AIMP2 that is at the core of the multisubunit complex.

It localises to the cytoplasm. The protein localises to the cytosol. It is found in the nucleus. The protein resides in the nucleolus. It catalyses the reaction tRNA(Met) + L-methionine + ATP = L-methionyl-tRNA(Met) + AMP + diphosphate. In terms of biological role, catalyzes the specific attachment of an amino acid to its cognate tRNA in a 2 step reaction: the amino acid (AA) is first activated by ATP to form AA-AMP and then transferred to the acceptor end of the tRNA. Plays a role in the synthesis of ribosomal RNA in the nucleolus. This is Methionine--tRNA ligase, cytoplasmic (MARS1) from Bos taurus (Bovine).